We begin with the raw amino-acid sequence, 680 residues long: Zinc finger protein 263 (680 aa).

A Glycyl lysine isopeptide (Lys-Gly) (interchain with G-Cter in SUMO2) cross-link involves residue Lys19. An SCAN box domain is found at 43–125 (HLRFRRFRFQ…TLVERMQKEL (83 aa)). The interval 147–191 (LPLETAGESPSFKLEPMETERSPGPRLQELLDPSPQRDSQAVKER) is disordered. A Glycyl lysine isopeptide (Lys-Gly) (interchain with G-Cter in SUMO2) cross-link involves residue Lys159. Phosphoserine is present on residues Ser168 and Ser180. Glycyl lysine isopeptide (Lys-Gly) (interchain with G-Cter in SUMO2) cross-links involve residues Lys286, Lys300, and Lys376. 5 C2H2-type zinc fingers span residues 378-400 (HLCA…QRIH), 434-456 (HKCL…QRTH), 462-484 (FQCN…QRTH), 490-512 (YKCP…QRIH), and 518-540 (YRCS…ERTH). Residues Lys570 and Lys579 each participate in a glycyl lysine isopeptide (Lys-Gly) (interchain with G-Cter in SUMO2) cross-link. 4 C2H2-type zinc fingers span residues 572-594 (FECS…QRTH), 600-622 (YKCI…QRIH), 628-650 (YTCH…LRTH), and 656-678 (YKCS…QRTH).

The protein belongs to the krueppel C2H2-type zinc-finger protein family. Interacts with a number of proteins involved in chromatin modification and transcriptional corepression including DNMT1, DNMT3A, HDAC2, PHF8, TRIM28/KAP1, SETDB1, EZH2, UHRF1, CBX3/HP1-gamma, and CBX5/HP1-alpha; recruits these proteins to the SIX3 promoter region, leading to SIX3 transcriptional repression. Interacts with MAPK3/ERK1 and MAPK1/ERK2. Post-translationally, ubiquitinated, leading to proteasomal degradation. Expressed in Purkinje cells in the brain (at protein level).

The protein resides in the nucleus. Functionally, transcription factor that binds to the consensus sequence 5'-TCCTCCC-3' and acts as a transcriptional repressor. Binds to the promoter region of SIX3 and recruits other proteins involved in chromatin modification and transcriptional corepression, resulting in methylation of the promoter and transcriptional repression. Acts as a transcriptional repressor of HS3ST1 and HS3ST3A1 via binding to gene promoter regions. In Mus musculus (Mouse), this protein is Zinc finger protein 263.